Here is a 76-residue protein sequence, read N- to C-terminus: DNA-directed RNA polymerase subunit Rpo5 (76 aa).

It belongs to the archaeal Rpo5/eukaryotic RPB5 RNA polymerase subunit family. Part of the RNA polymerase complex.

The protein resides in the cytoplasm. It carries out the reaction RNA(n) + a ribonucleoside 5'-triphosphate = RNA(n+1) + diphosphate. Its function is as follows. DNA-dependent RNA polymerase (RNAP) catalyzes the transcription of DNA into RNA using the four ribonucleoside triphosphates as substrates. This is DNA-directed RNA polymerase subunit Rpo5 from Archaeoglobus fulgidus (strain ATCC 49558 / DSM 4304 / JCM 9628 / NBRC 100126 / VC-16).